A 266-amino-acid chain; its full sequence is Interleukin-1 beta (266 aa).

A propeptide spanning residues M1 to D114 is cleaved from the precursor.

This sequence belongs to the IL-1 family. As to quaternary structure, monomer. In its precursor form, weakly interacts with full-length MEFV; the mature cytokine does not interact at all. Interacts with integrins ITGAV:ITGBV and ITGA5:ITGB1; integrin-binding is required for IL1B signaling. Interacts with cargo receptor TMED10; the interaction is direct and is required for the secretion of IL1B mature form. Interacts with HSP90AB1; the interaction facilitates cargo translocation into the ERGIC. Interacts with HSP90B1; the interaction facilitates cargo translocation into the ERGIC.

It is found in the cytoplasm. Its subcellular location is the cytosol. It localises to the secreted. The protein resides in the lysosome. The protein localises to the extracellular exosome. Its function is as follows. Potent pro-inflammatory cytokine. Initially discovered as the major endogenous pyrogen, induces prostaglandin synthesis, neutrophil influx and activation, T-cell activation and cytokine production, B-cell activation and antibody production, and fibroblast proliferation and collagen production. Promotes Th17 differentiation of T-cells. Synergizes with IL12/interleukin-12 to induce IFNG synthesis from T-helper 1 (Th1) cells. Plays a role in angiogenesis by inducing VEGF production synergistically with TNF and IL6. Involved in transduction of inflammation downstream of pyroptosis: its mature form is specifically released in the extracellular milieu by passing through the gasdermin-D (GSDMD) pore. In Cavia porcellus (Guinea pig), this protein is Interleukin-1 beta (IL1B).